Consider the following 347-residue polypeptide: Eukaryotic translation initiation factor 3 subunit H (347 aa).

The region spanning 1–142 (MKIMKHCSQT…LRAFRLSPRF (142 aa)) is the MPN domain.

The protein belongs to the eIF-3 subunit H family. In terms of assembly, component of the eukaryotic translation initiation factor 3 (eIF-3) complex.

It is found in the cytoplasm. Functionally, component of the eukaryotic translation initiation factor 3 (eIF-3) complex, which is involved in protein synthesis of a specialized repertoire of mRNAs and, together with other initiation factors, stimulates binding of mRNA and methionyl-tRNAi to the 40S ribosome. The eIF-3 complex specifically targets and initiates translation of a subset of mRNAs involved in cell proliferation. In Neosartorya fischeri (strain ATCC 1020 / DSM 3700 / CBS 544.65 / FGSC A1164 / JCM 1740 / NRRL 181 / WB 181) (Aspergillus fischerianus), this protein is Eukaryotic translation initiation factor 3 subunit H.